Consider the following 330-residue polypeptide: MISLESQVLERHISFFDGKSVLFAGGISDSFPQTLASKCSSIQIWSCYFDYARTQSAVNFSVEFQGQADLIVYYWTKNKQEVNFQLIQLLAQASIGQEILIIGENRCGVRSVEKTLSPYGEIAKIDSARRCGLYHFSLQNKPHFELKNFWRTYQHSTLENLTIYSLPGVFSAAELDTGTELLLSTIDNKIKGKVLDLGCGAGVIGSMIKKRTPNAQITMTDIHAMALESARKTLSENQLQGEVYASDVFSDIEGKFDLIISNPPFHDGIDTAYRAVTELITQAKWHLNQGGELRIVANSFLPYPELLRQHFNDYQVLAQTGKFKVYSVKN.

Belongs to the methyltransferase superfamily. RsmC family. Monomer.

The protein localises to the cytoplasm. The enzyme catalyses guanosine(1207) in 16S rRNA + S-adenosyl-L-methionine = N(2)-methylguanosine(1207) in 16S rRNA + S-adenosyl-L-homocysteine + H(+). Functionally, specifically methylates the guanine in position 1207 of 16S rRNA in the 30S particle. The polypeptide is Ribosomal RNA small subunit methyltransferase C (Haemophilus influenzae (strain ATCC 51907 / DSM 11121 / KW20 / Rd)).